The chain runs to 412 residues: Multifunctional CCA protein (412 aa).

The ATP site is built by G8 and R11. G8 and R11 together coordinate CTP. Residues D21 and D23 each contribute to the Mg(2+) site. 3 residues coordinate ATP: R91, R137, and R140. R91, R137, and R140 together coordinate CTP. The region spanning 225 to 326 (TGIHVMMVID…ADMLQATDAY (102 aa)) is the HD domain.

The protein belongs to the tRNA nucleotidyltransferase/poly(A) polymerase family. Bacterial CCA-adding enzyme type 1 subfamily. Monomer. Can also form homodimers and oligomers. Mg(2+) serves as cofactor. The cofactor is Ni(2+).

The catalysed reaction is a tRNA precursor + 2 CTP + ATP = a tRNA with a 3' CCA end + 3 diphosphate. It catalyses the reaction a tRNA with a 3' CCA end + 2 CTP + ATP = a tRNA with a 3' CCACCA end + 3 diphosphate. Catalyzes the addition and repair of the essential 3'-terminal CCA sequence in tRNAs without using a nucleic acid template. Adds these three nucleotides in the order of C, C, and A to the tRNA nucleotide-73, using CTP and ATP as substrates and producing inorganic pyrophosphate. tRNA 3'-terminal CCA addition is required both for tRNA processing and repair. Also involved in tRNA surveillance by mediating tandem CCA addition to generate a CCACCA at the 3' terminus of unstable tRNAs. While stable tRNAs receive only 3'-terminal CCA, unstable tRNAs are marked with CCACCA and rapidly degraded. The protein is Multifunctional CCA protein of Nitrosomonas eutropha (strain DSM 101675 / C91 / Nm57).